A 91-amino-acid chain; its full sequence is Probable Fe(2+)-trafficking protein (91 aa).

It belongs to the Fe(2+)-trafficking protein family.

Functionally, could be a mediator in iron transactions between iron acquisition and iron-requiring processes, such as synthesis and/or repair of Fe-S clusters in biosynthetic enzymes. The polypeptide is Probable Fe(2+)-trafficking protein (Burkholderia ambifaria (strain MC40-6)).